Here is a 145-residue protein sequence, read N- to C-terminus: Large ribosomal subunit protein uL15 (145 aa).

Residues 1-52 form a disordered region; sequence MFNLLKPKGASKRRKIVGRGPGSGLGKTSGRGQKGQKARNTSPRLGFEGGQT. The span at 19–33 shows a compositional bias: gly residues; it reads RGPGSGLGKTSGRGQ.

The protein belongs to the universal ribosomal protein uL15 family. Part of the 50S ribosomal subunit.

Functionally, binds to the 23S rRNA. The sequence is that of Large ribosomal subunit protein uL15 from Borreliella burgdorferi (strain ATCC 35210 / DSM 4680 / CIP 102532 / B31) (Borrelia burgdorferi).